The following is a 176-amino-acid chain: MRVLGIDPGSRITGYGIVEQAGSRLIHVDNGAIFTDSALDFPGRLKSIFDGLTTVIAEYEPDEVAVENVFLSNNAQSALKLGQARGAAIVAAVHAGLPVAEYTALQVKQAVVGRGKAAKEQVQKMLTALLSLPEVAQADASDALAVAVCHLHSHHLVRTSASAVPHRATSWRNFKP.

Residues aspartate 7, glutamate 67, and aspartate 139 contribute to the active site. 3 residues coordinate Mg(2+): aspartate 7, glutamate 67, and aspartate 139.

This sequence belongs to the RuvC family. As to quaternary structure, homodimer which binds Holliday junction (HJ) DNA. The HJ becomes 2-fold symmetrical on binding to RuvC with unstacked arms; it has a different conformation from HJ DNA in complex with RuvA. In the full resolvosome a probable DNA-RuvA(4)-RuvB(12)-RuvC(2) complex forms which resolves the HJ. Mg(2+) is required as a cofactor.

The protein resides in the cytoplasm. The enzyme catalyses Endonucleolytic cleavage at a junction such as a reciprocal single-stranded crossover between two homologous DNA duplexes (Holliday junction).. In terms of biological role, the RuvA-RuvB-RuvC complex processes Holliday junction (HJ) DNA during genetic recombination and DNA repair. Endonuclease that resolves HJ intermediates. Cleaves cruciform DNA by making single-stranded nicks across the HJ at symmetrical positions within the homologous arms, yielding a 5'-phosphate and a 3'-hydroxyl group; requires a central core of homology in the junction. The consensus cleavage sequence is 5'-(A/T)TT(C/G)-3'. Cleavage occurs on the 3'-side of the TT dinucleotide at the point of strand exchange. HJ branch migration catalyzed by RuvA-RuvB allows RuvC to scan DNA until it finds its consensus sequence, where it cleaves and resolves the cruciform DNA. This is Crossover junction endodeoxyribonuclease RuvC from Pelobacter propionicus (strain DSM 2379 / NBRC 103807 / OttBd1).